The chain runs to 615 residues: Zinc finger protein 181 (615 aa).

Residues 48–120 (VTFSDVAIDF…EKKLSKGLIP (73 aa)) form the KRAB domain. Residues lysine 153 and lysine 170 each participate in a glycyl lysine isopeptide (Lys-Gly) (interchain with G-Cter in SUMO2) cross-link. C2H2-type zinc fingers lie at residues 281–303 (YTCS…WRIH), 309–331 (YECR…LISH), 337–359 (YKCI…QSTH), 365–387 (YECM…LRIH), 393–415 (YECR…QKIH), 421–443 (YECR…QRIH), 449–471 (YECN…QSIH), 477–499 (FECQ…LRNH), 505–527 (YECS…HRIH), 533–555 (YECI…QRIH), and 561–583 (YKCN…QRVH).

This sequence belongs to the krueppel C2H2-type zinc-finger protein family.

Its subcellular location is the nucleus. May be involved in transcriptional regulation. The sequence is that of Zinc finger protein 181 (ZNF181) from Pongo abelii (Sumatran orangutan).